The primary structure comprises 236 residues: MTAVQEERTTEELKALAERAGRELEDATALEILRWAAETFGDRFCVTSSMEDAVVAHLASRALPGVDVVFLDTGYHFPETIGTRDAVEAVMDVNVITLTPRQTVAEQDAEYGPKLHDRDPDLCCALRKVKPLEEGLAGYRAWATGLRRDESETRANTPVVGWDEKRGKVKISPIAKWSQEDVQTYVTEHGVLTNPLLTDGYASVGCAPCTRRVLEGEDARAGRWAGRSKTECGLHG.

Residues C123, C124, C206, and C209 each contribute to the [4Fe-4S] cluster site. C232 (nucleophile; cysteine thiosulfonate intermediate) is an active-site residue.

Belongs to the PAPS reductase family. CysH subfamily. [4Fe-4S] cluster serves as cofactor.

It localises to the cytoplasm. It catalyses the reaction [thioredoxin]-disulfide + sulfite + AMP + 2 H(+) = adenosine 5'-phosphosulfate + [thioredoxin]-dithiol. It participates in sulfur metabolism; hydrogen sulfide biosynthesis; sulfite from sulfate. Catalyzes the formation of sulfite from adenosine 5'-phosphosulfate (APS) using thioredoxin as an electron donor. In Streptomyces coelicolor (strain ATCC BAA-471 / A3(2) / M145), this protein is Adenosine 5'-phosphosulfate reductase.